The sequence spans 102 residues: RNA-binding protein Hfq (102 aa).

The region spanning 9–68 is the Sm domain; sequence DPFVNALRRERVPVSIYLVNGIKLQGQIESFDQFVILLKNTVSQMVYKHAISTVVPSRPV. The segment at 63-102 is disordered; it reads VPSRPVSHHSNNAGGGASNNYHHGSNAQGSTAQQDSEETE. Positions 70–88 are enriched in low complexity; sequence HHSNNAGGGASNNYHHGSN.

The protein belongs to the Hfq family. In terms of assembly, homohexamer.

Its function is as follows. RNA chaperone that binds small regulatory RNA (sRNAs) and mRNAs to facilitate mRNA translational regulation in response to envelope stress, environmental stress and changes in metabolite concentrations. Also binds with high specificity to tRNAs. This Salmonella heidelberg (strain SL476) protein is RNA-binding protein Hfq.